The primary structure comprises 212 residues: 3-isopropylmalate dehydratase small subunit 1 (212 aa).

It belongs to the LeuD family. LeuD type 1 subfamily. As to quaternary structure, heterodimer of LeuC and LeuD.

The catalysed reaction is (2R,3S)-3-isopropylmalate = (2S)-2-isopropylmalate. It participates in amino-acid biosynthesis; L-leucine biosynthesis; L-leucine from 3-methyl-2-oxobutanoate: step 2/4. Catalyzes the isomerization between 2-isopropylmalate and 3-isopropylmalate, via the formation of 2-isopropylmaleate. The polypeptide is 3-isopropylmalate dehydratase small subunit 1 (Chromobacterium violaceum (strain ATCC 12472 / DSM 30191 / JCM 1249 / CCUG 213 / NBRC 12614 / NCIMB 9131 / NCTC 9757 / MK)).